Reading from the N-terminus, the 329-residue chain is Putative methylthioribose-1-phosphate isomerase (329 aa).

Substrate contacts are provided by residues Arg-50–Ala-52, Arg-84, and Gln-182. The active-site Proton donor is Asp-223. Substrate is bound at residue Asn-233–Lys-234.

Belongs to the eIF-2B alpha/beta/delta subunits family. MtnA subfamily.

The enzyme catalyses 5-(methylsulfanyl)-alpha-D-ribose 1-phosphate = 5-(methylsulfanyl)-D-ribulose 1-phosphate. Its function is as follows. Catalyzes the interconversion of methylthioribose-1-phosphate (MTR-1-P) into methylthioribulose-1-phosphate (MTRu-1-P). The protein is Putative methylthioribose-1-phosphate isomerase of Methanocaldococcus jannaschii (strain ATCC 43067 / DSM 2661 / JAL-1 / JCM 10045 / NBRC 100440) (Methanococcus jannaschii).